The sequence spans 241 residues: MAPK phosphothreonine lyase (241 aa).

The active-site Proton donor is the His106. The active-site Proton acceptor is Lys136.

The protein belongs to the phosphothreonine lyase family.

Its subcellular location is the secreted. Functionally, secreted effector that irreversibly inactivates host MAP kinases by catalyzing the dephosphorylation of the phosphothreonine residue in the pT-X-pY motif present in MAPKs, via a beta-elimination reaction leading to a dehydrobutyrine residue. The chain is MAPK phosphothreonine lyase (spvC) from Salmonella enteritidis.